We begin with the raw amino-acid sequence, 124 residues long: Transcription initiation factor TFIID subunit 13 (124 aa).

Positions 1-16 (MADEEEDPTFEEENEE) are enriched in acidic residues. The tract at residues 1–28 (MADEEEDPTFEEENEEIGGGAEGGQGKR) is disordered. Positions 32–74 (FSKELRCMMYGFGDDQNPYTESVDILEDLVIEFITEMTHKAMS) constitute a Histone-fold domain.

This sequence belongs to the TAF13 family. Component of the TFIID basal transcription factor complex, composed of TATA-box-binding protein TBP, and a number of TBP-associated factors (TAFs), including TAF1, TAF2, TAF3, TAF4, TAF5, TAF6, TAF7, TAF8, TAF9, TAF10, TAF11, TAF12 and TAF13. Interacts with TBP, and more strongly with TAF10 and TAF11.

The protein resides in the nucleus. Functionally, the TFIID basal transcription factor complex plays a major role in the initiation of RNA polymerase II (Pol II)-dependent transcription. TFIID recognizes and binds promoters via its subunit TBP, a TATA-box-binding protein, and promotes assembly of the pre-initiation complex (PIC). The TFIID complex consists of TBP and TBP-associated factors (TAFs), including TAF1, TAF2, TAF3, TAF4, TAF5, TAF6, TAF7, TAF8, TAF9, TAF10, TAF11, TAF12 and TAF13. TAF13, together with TAF11 and TBP, play key roles during promoter binding by the TFIID and TFIIA transcription factor complexes. This is Transcription initiation factor TFIID subunit 13 from Bos taurus (Bovine).